Reading from the N-terminus, the 238-residue chain is Uridylate kinase (238 aa).

Residue 12–15 participates in ATP binding; that stretch reads KLSG. UMP is bound at residue Gly-54. ATP contacts are provided by Gly-55 and Arg-59. Residues Asp-74 and 135–142 contribute to the UMP site; that span reads TGNPFFTT. ATP contacts are provided by Thr-162, Tyr-168, and Asp-171.

This sequence belongs to the UMP kinase family. In terms of assembly, homohexamer.

It is found in the cytoplasm. It catalyses the reaction UMP + ATP = UDP + ADP. It functions in the pathway pyrimidine metabolism; CTP biosynthesis via de novo pathway; UDP from UMP (UMPK route): step 1/1. Inhibited by UTP. Catalyzes the reversible phosphorylation of UMP to UDP. The polypeptide is Uridylate kinase (Janthinobacterium sp. (strain Marseille) (Minibacterium massiliensis)).